The chain runs to 210 residues: Na(+)-translocating NADH-quinone reductase subunit D (210 aa).

Helical transmembrane passes span 42-62 (FVMT…VSLI), 72-92 (IIVQ…VLKA), 103-123 (VFVG…AFAM), 131-151 (LIDG…VGFF), and 178-198 (NGLM…IWVI).

Belongs to the NqrDE/RnfAE family. As to quaternary structure, composed of six subunits; NqrA, NqrB, NqrC, NqrD, NqrE and NqrF.

The protein resides in the cell inner membrane. It carries out the reaction a ubiquinone + n Na(+)(in) + NADH + H(+) = a ubiquinol + n Na(+)(out) + NAD(+). Functionally, NQR complex catalyzes the reduction of ubiquinone-1 to ubiquinol by two successive reactions, coupled with the transport of Na(+) ions from the cytoplasm to the periplasm. NqrA to NqrE are probably involved in the second step, the conversion of ubisemiquinone to ubiquinol. This Vibrio parahaemolyticus serotype O3:K6 (strain RIMD 2210633) protein is Na(+)-translocating NADH-quinone reductase subunit D.